Reading from the N-terminus, the 867-residue chain is Cadherin-related family member 1 (867 aa).

A signal peptide spans 1–21; that stretch reads MKHEWNLCPSIFFSIFHICLS. Residues 22–707 lie on the Extracellular side of the membrane; the sequence is VQTNYGPYFF…SKDNPMKALG (686 aa). Cadherin domains follow at residues 39-138, 139-250, 251-357, 363-476, 477-580, and 572-692; these read NGNM…SPGF, LNTP…PPVF, VGTP…PPTF, PQNR…VPRF, SSEY…SPEF, and DIND…GPMA. Residues 708–728 traverse the membrane as a helical segment; the sequence is VLAGVMAIMVVITIFISTAMF. At 729–867 the chain is on the cytoplasmic side; sequence WRNKKSNRVM…KNAGSSMSFY (139 aa). The interval 777–825 is disordered; the sequence is EMESGPKNENRNNNYQGIPVPPRAPCPPPPPRLMPKVSKTERSLPTVSG. Over residues 795-809 the composition is skewed to pro residues; sequence PVPPRAPCPPPPPRL.

Expressed in photoreceptor cells of the outer nuclear layer of the retina and in the pinal gland.

The protein resides in the membrane. Its function is as follows. Potential calcium-dependent cell-adhesion protein. The polypeptide is Cadherin-related family member 1 (cdhr1) (Xenopus laevis (African clawed frog)).